Consider the following 137-residue polypeptide: Large ribosomal subunit protein bL17 (137 aa).

It belongs to the bacterial ribosomal protein bL17 family. As to quaternary structure, part of the 50S ribosomal subunit. Contacts protein L32.

The protein is Large ribosomal subunit protein bL17 of Bradyrhizobium sp. (strain BTAi1 / ATCC BAA-1182).